Reading from the N-terminus, the 276-residue chain is MSGELDAGVAKASLAAAQQVLDVQLSAEGADAGKTGEDLFAVTSLLDSSVGLRRALTDPSRSGAAKAEFVRRTLSGRITPAALETVVALASARWAAGRDLSDATERLAVVAVVTQAERSGHLDALEDELFRFARTVAGSPALRDALADRTAPDANRASLAARLLLGKASPETVQLARRAASSSRGMRAERLLEEWVEVVAKRREQLVAHVVSATPLTDAQRERLAATLSRQYGRAIRVNLDVDPHLVGGLRVSVGDDVIDGSISTRLDEARRRLAG.

It belongs to the ATPase delta chain family. F-type ATPases have 2 components, F(1) - the catalytic core - and F(0) - the membrane proton channel. F(1) has five subunits: alpha(3), beta(3), gamma(1), delta(1), epsilon(1). F(0) has three main subunits: a(1), b(2) and c(10-14). The alpha and beta chains form an alternating ring which encloses part of the gamma chain. F(1) is attached to F(0) by a central stalk formed by the gamma and epsilon chains, while a peripheral stalk is formed by the delta and b chains.

The protein localises to the cell membrane. Its function is as follows. F(1)F(0) ATP synthase produces ATP from ADP in the presence of a proton or sodium gradient. F-type ATPases consist of two structural domains, F(1) containing the extramembraneous catalytic core and F(0) containing the membrane proton channel, linked together by a central stalk and a peripheral stalk. During catalysis, ATP synthesis in the catalytic domain of F(1) is coupled via a rotary mechanism of the central stalk subunits to proton translocation. This protein is part of the stalk that links CF(0) to CF(1). It either transmits conformational changes from CF(0) to CF(1) or is implicated in proton conduction. This chain is ATP synthase subunit delta, found in Kineococcus radiotolerans (strain ATCC BAA-149 / DSM 14245 / SRS30216).